The sequence spans 53 residues: Large ribosomal subunit protein bL32c (53 aa).

This sequence belongs to the bacterial ribosomal protein bL32 family.

It is found in the plastid. The protein localises to the chloroplast. The protein is Large ribosomal subunit protein bL32c (rpl32) of Guillardia theta (Cryptophyte).